The primary structure comprises 167 residues: Crossover junction endodeoxyribonuclease RuvC (167 aa).

Active-site residues include D8, E67, and D139. 3 residues coordinate Mg(2+): D8, E67, and D139.

Belongs to the RuvC family. As to quaternary structure, homodimer which binds Holliday junction (HJ) DNA. The HJ becomes 2-fold symmetrical on binding to RuvC with unstacked arms; it has a different conformation from HJ DNA in complex with RuvA. In the full resolvosome a probable DNA-RuvA(4)-RuvB(12)-RuvC(2) complex forms which resolves the HJ. The cofactor is Mg(2+).

Its subcellular location is the cytoplasm. It catalyses the reaction Endonucleolytic cleavage at a junction such as a reciprocal single-stranded crossover between two homologous DNA duplexes (Holliday junction).. The RuvA-RuvB-RuvC complex processes Holliday junction (HJ) DNA during genetic recombination and DNA repair. Endonuclease that resolves HJ intermediates. Cleaves cruciform DNA by making single-stranded nicks across the HJ at symmetrical positions within the homologous arms, yielding a 5'-phosphate and a 3'-hydroxyl group; requires a central core of homology in the junction. The consensus cleavage sequence is 5'-(A/T)TT(C/G)-3'. Cleavage occurs on the 3'-side of the TT dinucleotide at the point of strand exchange. HJ branch migration catalyzed by RuvA-RuvB allows RuvC to scan DNA until it finds its consensus sequence, where it cleaves and resolves the cruciform DNA. This is Crossover junction endodeoxyribonuclease RuvC from Halorhodospira halophila (strain DSM 244 / SL1) (Ectothiorhodospira halophila (strain DSM 244 / SL1)).